An 84-amino-acid polypeptide reads, in one-letter code: MITENERDRRTAAWLIETYGAEAVAEAETRIAGARKPYPSNIAKVLGASLPEALKRTENAAARQKLAGLRRMLDGKAVKTSQDL.

The chain is Cryptic plasmid protein A (cppA) from Neisseria gonorrhoeae.